We begin with the raw amino-acid sequence, 257 residues long: Gamma-secretase subunit APH-1B (257 aa).

A run of 7 helical transmembrane segments spans residues 5-25 (VFFGCAFIAFGPALALYVFTI), 32-52 (IIFLIAGAFFWLVSLLISSLV), 71-91 (LLIFGAFVSVYIQEMFRFAYY), 115-135 (LLAYVSGLGFGIMSGVFSFVN), 158-178 (YSAFMTLVIILLHVFWGIVFF), 186-206 (WGILLIVLLTHLLVSAQTFIS), and 213-233 (LASAFIILVLMGTWAFLAAGG).

The protein belongs to the APH-1 family. In terms of assembly, probable component of the gamma-secretase complex, a complex composed of a presenilin homodimer (PSEN1 or PSEN2), nicastrin (NCSTN), APH1 (APH1A or APH1B) and PEN2. Such minimal complex is sufficient for secretase activity, although other components may exist. Interacts with PSEN1 and PSEN2. In terms of tissue distribution, weakly or not expressed in leukocytes, lung, placenta, small intestine, liver, kidney, spleen thymus, colon, skeletal muscle, heart and brain.

The protein localises to the membrane. Its function is as follows. Probable subunit of the gamma-secretase complex, an endoprotease complex that catalyzes the intramembrane cleavage of integral proteins such as Notch receptors and APP (amyloid-beta precursor protein). It probably represents a stabilizing cofactor for the presenilin homodimer that promotes the formation of a stable complex. Probably present in a minority of gamma-secretase complexes compared to APH1A. The polypeptide is Gamma-secretase subunit APH-1B (APH1B) (Homo sapiens (Human)).